A 236-amino-acid chain; its full sequence is Proteasome subunit alpha (236 aa).

This sequence belongs to the peptidase T1A family. In terms of assembly, the 20S proteasome core is composed of 14 alpha and 14 beta subunits that assemble into four stacked heptameric rings, resulting in a barrel-shaped structure. The two inner rings, each composed of seven catalytic beta subunits, are sandwiched by two outer rings, each composed of seven alpha subunits. The catalytic chamber with the active sites is on the inside of the barrel. Has a gated structure, the ends of the cylinder being occluded by the N-termini of the alpha-subunits. Is capped by the proteasome-associated ATPase, ARC.

The protein resides in the cytoplasm. Its pathway is protein degradation; proteasomal Pup-dependent pathway. Its activity is regulated as follows. The formation of the proteasomal ATPase ARC-20S proteasome complex, likely via the docking of the C-termini of ARC into the intersubunit pockets in the alpha-rings, may trigger opening of the gate for substrate entry. Interconversion between the open-gate and close-gate conformations leads to a dynamic regulation of the 20S proteasome proteolysis activity. Component of the proteasome core, a large protease complex with broad specificity involved in protein degradation. This chain is Proteasome subunit alpha, found in Jonesia denitrificans (strain ATCC 14870 / DSM 20603 / BCRC 15368 / CIP 55.134 / JCM 11481 / NBRC 15587 / NCTC 10816 / Prevot 55134) (Listeria denitrificans).